The sequence spans 492 residues: Amphoterin-induced protein 1 (492 aa).

The N-terminal stretch at 1–27 (MQPQRDLRGLWLLLLSVFLLLFEVARA) is a signal peptide. Residues 28–61 (GRSVVSCPANCLCASNILSCSKQQLPNVPQSLPS) form the LRRNT domain. Residues 28–371 (GRSVVSCPAN…LHGHHDTLNT (344 aa)) are Extracellular-facing. Intrachain disulfides connect Cys34/Cys40 and Cys38/Cys47. LRR repeat units lie at residues 62–83 (YTAL…WTPT), 87–108 (NLHS…AFVP), 111–132 (NLRY…LFSD), 135–156 (ALEV…AFED), 159–180 (QLQK…LIKD), and 186–206 (KLML…TDLQ). N-linked (GlcNAc...) asparagine glycosylation is present at Asn72. Positions 208–272 (LPAWVKNGLY…FSLDFFNCSE (65 aa)) constitute an LRRCT domain. 3 cysteine pairs are disulfide-bonded: Cys225-Cys253, Cys227-Cys270, and Cys290-Cys340. Asn269, Asn315, Asn348, and Asn359 each carry an N-linked (GlcNAc...) asparagine glycan. An Ig-like C2-type domain is found at 269–352 (NCSEYKESAW…MGETFNETLS (84 aa)). Residues 372–392 (AYTTLVGCILSVVLVLIYLYL) form a helical membrane-spanning segment. The Cytoplasmic segment spans residues 393-492 (TPCRCWCRGV…SVFSDTPIVV (100 aa)). Positions 404–492 (KPSSHQGDSL…SVFSDTPIVV (89 aa)) are disordered. The segment covering 407–423 (SHQGDSLSSSMLSTTPN) has biased composition (polar residues). Positions 430–441 (GDKDDGFDRRVA) are enriched in basic and acidic residues. Residues Ser476 and Ser480 each carry the phosphoserine modification.

This sequence belongs to the immunoglobulin superfamily. AMIGO family. Homodimer, and heterodimer with AMIGO2 and AMIGO3. Interacts with KCNB1. In terms of tissue distribution, expressed in hippocampal and cortical neurons (at protein level). High levels in cerebellum, cerebrum, and retina. Low levels in liver, kidney, small intestine, spleen, lung and heart.

The protein resides in the cell membrane. It localises to the perikaryon. The protein localises to the cell projection. It is found in the dendrite. Its function is as follows. Promotes growth and fasciculation of neurites from cultured hippocampal neurons. May be involved in fasciculation as well as myelination of developing neural axons. May have a role in regeneration as well as neural plasticity in the adult nervous system. May mediate homophilic as well as heterophilic cell-cell interaction and contribute to signal transduction through its intracellular domain. Assembled with KCNB1 modulates the gating characteristics of the delayed rectifier voltage-dependent potassium channel KCNB1. This is Amphoterin-induced protein 1 from Mus musculus (Mouse).